The primary structure comprises 332 residues: L-lactate dehydrogenase A chain (332 aa).

Residues 29–57 and Arg-99 each bind NAD(+); that span reads GAVGMACAISILMKDLADELTLVDVVEDK. Residues Arg-106, Asn-138, and Arg-169 each contribute to the substrate site. Asn-138 contacts NAD(+). His-193 functions as the Proton acceptor in the catalytic mechanism. Residue Thr-248 coordinates substrate.

It belongs to the LDH/MDH superfamily. LDH family. In terms of assembly, homotetramer.

The protein localises to the cytoplasm. It catalyses the reaction (S)-lactate + NAD(+) = pyruvate + NADH + H(+). Its pathway is fermentation; pyruvate fermentation to lactate; (S)-lactate from pyruvate: step 1/1. Its function is as follows. Interconverts simultaneously and stereospecifically pyruvate and lactate with concomitant interconversion of NADH and NAD(+). This is L-lactate dehydrogenase A chain (LDHA) from Gallus gallus (Chicken).